A 760-amino-acid chain; its full sequence is DNA-directed RNA polymerase subunit beta' (760 aa).

The Zn(2+) site is built by cysteine 76, cysteine 78, cysteine 90, and cysteine 93. Positions 594, 596, and 598 each coordinate Mg(2+).

This sequence belongs to the RNA polymerase beta' chain family. RpoC1 subfamily. As to quaternary structure, in plastids the minimal PEP RNA polymerase catalytic core is composed of four subunits: alpha, beta, beta', and beta''. When a (nuclear-encoded) sigma factor is associated with the core the holoenzyme is formed, which can initiate transcription. The cofactor is Mg(2+). It depends on Zn(2+) as a cofactor.

The protein localises to the plastid. The protein resides in the chloroplast. It carries out the reaction RNA(n) + a ribonucleoside 5'-triphosphate = RNA(n+1) + diphosphate. DNA-dependent RNA polymerase catalyzes the transcription of DNA into RNA using the four ribonucleoside triphosphates as substrates. This Bigelowiella natans (Pedinomonas minutissima) protein is DNA-directed RNA polymerase subunit beta'.